Here is a 639-residue protein sequence, read N- to C-terminus: MDISGFLKENKESLKDLKEDDINEILEDYEIDNINDPKQKIRFFKQVENTRKRLKIEEKNRMLEEDINRMYEEEKNRMLEEEKKEFLIKVEEEKKEFLTKVEEEKQKLKTEVEDLKSIILTSSTKNGDLKGTTSYSELFKIKNSLKLIEENCEFKDWNIPSGIELKKHVINLDDCNQESTMQSKLDEYFKDFNKKRKLIITNGTKIKINSIISNRYCDYFINQKGFPFEPYWMHMVGDIKKGSISSDTNLDQVLKYIDIIVEKSNHHVLNRPMFGFLMNKTKIKFVKYDIENNKYYITIDYDLRIGFQYLSNIMIYLEQFIRNIPNSLQTILKNHTNDSVEFYYGATSSVFIVNKEFVYKWFNYPYFFQTEVKYLTFIDGIEGTPSIKQQNQTENWIQISPRGQLIKNLEGKPIDISFYTKVFCRNTQKHTSREVIHRDIRLSNLLMDSGGDPLLVDFGFANFTENEEFYQGTMNTASNRIYNILINNRTNHAFSVVESDDLESLVKVYIMENEQAVKRTIKSIPNSEIGLFRTMWEFFNTECFPQYSTLFQQAQNINYEELKNEFIKIDKIKNTTTTSNNNQNHTNIHKNTIANTTSYTNTLETSTTNPNTNTTTSDTNTSTTSTTNTNTTTSNTITA.

Positions 7 to 122 (LKENKESLKD…EDLKSIILTS (116 aa)) form a coiled coil. Residues 233–588 (MHMVGDIKKG…SNNNQNHTNI (356 aa)) form the Protein kinase domain. ATP-binding positions include 239-247 (IKKGSISSD) and Lys-284. Asp-439 functions as the Proton acceptor in the catalytic mechanism. The tract at residues 601 to 639 (NTLETSTTNPNTNTTTSDTNTSTTSTTNTNTTTSNTITA) is disordered.

Belongs to the protein kinase superfamily. Ser/Thr protein kinase family.

The enzyme catalyses L-seryl-[protein] + ATP = O-phospho-L-seryl-[protein] + ADP + H(+). It catalyses the reaction L-threonyl-[protein] + ATP = O-phospho-L-threonyl-[protein] + ADP + H(+). The sequence is that of Probable serine/threonine-protein kinase DDB_G0282777 from Dictyostelium discoideum (Social amoeba).